Reading from the N-terminus, the 694-residue chain is Elongation factor G (694 aa).

The tr-type G domain maps to 12–286 (SKLRNIGIMA…AVVDYLPSPI (275 aa)). Residues 21 to 28 (AHIDAGKT), 85 to 89 (DTPGH), and 139 to 142 (NKMD) each bind GTP.

It belongs to the TRAFAC class translation factor GTPase superfamily. Classic translation factor GTPase family. EF-G/EF-2 subfamily.

It is found in the cytoplasm. In terms of biological role, catalyzes the GTP-dependent ribosomal translocation step during translation elongation. During this step, the ribosome changes from the pre-translocational (PRE) to the post-translocational (POST) state as the newly formed A-site-bound peptidyl-tRNA and P-site-bound deacylated tRNA move to the P and E sites, respectively. Catalyzes the coordinated movement of the two tRNA molecules, the mRNA and conformational changes in the ribosome. The sequence is that of Elongation factor G from Pseudothermotoga lettingae (strain ATCC BAA-301 / DSM 14385 / NBRC 107922 / TMO) (Thermotoga lettingae).